The sequence spans 313 residues: Arabinooligosaccharides transport system permease protein AraP (313 aa).

Transmembrane regions (helical) follow at residues 39–59 (FVLS…IMSF), 91–111 (LEYT…LAIF), 126–146 (ALFI…RLIF), 176–196 (MFLM…LYFL), 224–244 (ITLP…IIGG), and 281–301 (MGYG…VSLI). The region spanning 87-302 (LWNTLEYTFW…IVILVVSLIS (216 aa)) is the ABC transmembrane type-1 domain.

Belongs to the binding-protein-dependent transport system permease family. MalFG subfamily. In terms of assembly, the complex is composed of two ATP-binding proteins (MsmX), two transmembrane proteins (AraP and AraQ) and a solute-binding protein (AraN).

It is found in the cell membrane. Part of the ABC transporter complex AraNPQ involved in the uptake of arabinooligosaccharides. Transports alpha-1,5-arabinooligosaccharides, at least up to four L-arabinosyl units. Responsible for the translocation of the substrate across the membrane. The polypeptide is Arabinooligosaccharides transport system permease protein AraP (Bacillus subtilis (strain 168)).